A 495-amino-acid chain; its full sequence is Cobyric acid synthase (495 aa).

One can recognise a GATase cobBQ-type domain in the interval K253–F446. The active-site Nucleophile is the C334. H438 is a catalytic residue.

This sequence belongs to the CobB/CobQ family. CobQ subfamily.

It participates in cofactor biosynthesis; adenosylcobalamin biosynthesis. Functionally, catalyzes amidations at positions B, D, E, and G on adenosylcobyrinic A,C-diamide. NH(2) groups are provided by glutamine, and one molecule of ATP is hydrogenolyzed for each amidation. The polypeptide is Cobyric acid synthase (Chlorobium phaeobacteroides (strain BS1)).